Consider the following 193-residue polypeptide: Adenylate kinase (193 aa).

An ATP-binding site is contributed by 11-16 (GSGKGT). An NMP region spans residues 31 to 60 (STGDIFRANVKGETPLGLEAKKYMDAGDYV). AMP is bound by residues threonine 32, arginine 37, 58-60 (DYV), 86-89 (GYPR), and glutamine 93. Positions 127 to 137 (GRAKESGRSDD) are LID. Arginine 128 provides a ligand contact to ATP. AMP-binding residues include arginine 134 and arginine 145. Glycine 173 lines the ATP pocket.

Belongs to the adenylate kinase family. As to quaternary structure, monomer.

Its subcellular location is the cytoplasm. The enzyme catalyses AMP + ATP = 2 ADP. It participates in purine metabolism; AMP biosynthesis via salvage pathway; AMP from ADP: step 1/1. In terms of biological role, catalyzes the reversible transfer of the terminal phosphate group between ATP and AMP. Plays an important role in cellular energy homeostasis and in adenine nucleotide metabolism. The polypeptide is Adenylate kinase (Renibacterium salmoninarum (strain ATCC 33209 / DSM 20767 / JCM 11484 / NBRC 15589 / NCIMB 2235)).